Reading from the N-terminus, the 902-residue chain is Cytosolic carboxypeptidase 2 (902 aa).

A Peptidase M14 domain is found at 396–666 (YPYTYTDLQC…HVCDTLLDFC (271 aa)). Zn(2+) contacts are provided by H462, E465, and H558. The active-site Proton donor/acceptor is E630. Residues 746-758 (FKKKKKKSLQTRK) show a composition bias toward basic residues. 2 disordered regions span residues 746 to 770 (FKKK…KNLM) and 796 to 879 (FKNS…PRSR). Residues 853–866 (VSCSPKRTINSSQE) show a composition bias toward polar residues.

It belongs to the peptidase M14 family. Interacts with RARRES1, KIF11 AND MAPRE1. The cofactor is Zn(2+).

The protein resides in the cytoplasm. The protein localises to the cytosol. It localises to the cytoskeleton. It is found in the microtubule organizing center. Its subcellular location is the centrosome. The protein resides in the centriole. The protein localises to the cilium basal body. The enzyme catalyses (L-glutamyl)(n+1)-gamma-L-glutamyl-L-glutamyl-[protein] + H2O = (L-glutamyl)(n)-gamma-L-glutamyl-L-glutamyl-[protein] + L-glutamate. With respect to regulation, inhibited by RARRES1. Functionally, metallocarboxypeptidase that mediates deglutamylation of tubulin and non-tubulin target proteins. Catalyzes the removal of polyglutamate side chains present on the gamma-carboxyl group of glutamate residues within the C-terminal tail of tubulin protein. Specifically cleaves tubulin long-side-chains, while it is not able to remove the branching point glutamate. Also catalyzes the removal of polyglutamate residues from the carboxy-terminus of non-tubulin proteins such as MYLK. This Homo sapiens (Human) protein is Cytosolic carboxypeptidase 2.